A 369-amino-acid chain; its full sequence is Core-capsid bridging protein (369 aa).

The segment at 15–50 (APEIYGPPKKEEQDYKPRKLKRVKKKKKDDDDDELD) is disordered. Positions 22–31 (PKKEEQDYKP) are enriched in basic and acidic residues. A compositionally biased stretch (basic residues) spans 32-41 (RKLKRVKKKK). Phosphothreonine; by host is present on Thr85. Ser166 is modified (phosphoserine; by host). The tract at residues 307–342 (PGYRGYTYRPRRRATTRRRTTTGTRRRRRRRQPVLA) is disordered. Basic residues predominate over residues 315–338 (RPRRRATTRRRTTTGTRRRRRRRQ).

Belongs to the adenoviridae core-capsid bridging protein family. Monomer. Homodimer. Exists in equilibrium between monomers and dimers in solution. Interacts with the histone-like nucleoprotein; this interactions bridge the virus core to the capsid. Interacts with core protein X; this interactions bridge the virus core to the capsid. Interacts with the endosome lysis protein VI; this interactions bridge the virus core to the capsid. Interacts with the peripentonal hexons. Interacts with host NPM1; this interaction might play a role in virus assembly.

It is found in the virion. The protein localises to the host nucleus. The protein resides in the host nucleolus. Its function is as follows. Associates loosely with the viral DNA to form an outer shell around the nucleoprotein-DNA complex and links it with the capsid by binding the endosome lysis protein. Dissociates from the viral genome during entry. Might be involved in nuclear capsid assembly of the viral particles through its association with NPM1/nucleophosmin. The polypeptide is Core-capsid bridging protein (Homo sapiens (Human)).